We begin with the raw amino-acid sequence, 806 residues long: DNA topoisomerase 4 subunit A (806 aa).

Residues 33–499 enclose the Topo IIA-type catalytic domain; it reads LPDARDGLKP…EEIKINLEVM (467 aa). Tyrosine 121 serves as the catalytic O-(5'-phospho-DNA)-tyrosine intermediate.

The protein belongs to the type II topoisomerase GyrA/ParC subunit family. ParC type 2 subfamily. As to quaternary structure, heterotetramer composed of ParC and ParE.

Its subcellular location is the cell membrane. The protein resides in the cytoplasm. The enzyme catalyses ATP-dependent breakage, passage and rejoining of double-stranded DNA.. In terms of biological role, topoisomerase IV is essential for chromosome segregation. It relaxes supercoiled DNA. Performs the decatenation events required during the replication of a circular DNA molecule. This is DNA topoisomerase 4 subunit A from Bacillus subtilis (strain 168).